The primary structure comprises 161 residues: Pleiotrophin-B (161 aa).

The signal sequence occupies residues 1 to 23; sequence MHHQHGLFMLALLAFLLVMTVLG. 5 cysteine pairs are disulfide-bonded: C41-C70, C49-C79, C56-C83, C93-C125, and C103-C135. Chondroitin sulfate binding stretches follow at residues 86–93 and 117–125; these read KKQFGAEC and KRALHNAEC. Residues 136-161 are disordered; the sequence is GKVTKPKLQESKKKKKEGKNKEKLLD. Residues 141-161 form a chondroitin sulfate A binding region; the sequence is PKLQESKKKKKEGKNKEKLLD.

Belongs to the pleiotrophin family. Expressed in high levels in brain and eye. Lower levels in bone. In the tailbud embryo stage, it is expressed exclusively in the central nervous system, especially in the hind region of the brain.

Its subcellular location is the secreted. In terms of biological role, secreted growth factor that mediates its signal through cell-surface proteoglycan and non-proteoglycan receptors. Binds cell-surface proteoglycan receptor via their chondroitin sulfate (CS) groups. Thereby regulates many processes like cell proliferation, cell survival, cell growth, cell differentiation and cell migration. Has antibacterial activity against both Gram-positive and Gram-negative bacteria. The polypeptide is Pleiotrophin-B (ptn-b) (Xenopus laevis (African clawed frog)).